The following is a 311-amino-acid chain: Methionyl-tRNA formyltransferase (311 aa).

A (6S)-5,6,7,8-tetrahydrofolate-binding site is contributed by 112 to 115; sequence SLLP.

This sequence belongs to the Fmt family.

The catalysed reaction is L-methionyl-tRNA(fMet) + (6R)-10-formyltetrahydrofolate = N-formyl-L-methionyl-tRNA(fMet) + (6S)-5,6,7,8-tetrahydrofolate + H(+). Attaches a formyl group to the free amino group of methionyl-tRNA(fMet). The formyl group appears to play a dual role in the initiator identity of N-formylmethionyl-tRNA by promoting its recognition by IF2 and preventing the misappropriation of this tRNA by the elongation apparatus. This Chelativorans sp. (strain BNC1) protein is Methionyl-tRNA formyltransferase.